Reading from the N-terminus, the 842-residue chain is Alanine--tRNA ligase (842 aa).

Zn(2+) is bound by residues His-549, His-553, Cys-650, and His-654.

It belongs to the class-II aminoacyl-tRNA synthetase family. Zn(2+) is required as a cofactor.

It localises to the cytoplasm. It catalyses the reaction tRNA(Ala) + L-alanine + ATP = L-alanyl-tRNA(Ala) + AMP + diphosphate. Its function is as follows. Catalyzes the attachment of alanine to tRNA(Ala) in a two-step reaction: alanine is first activated by ATP to form Ala-AMP and then transferred to the acceptor end of tRNA(Ala). Also edits incorrectly charged Ser-tRNA(Ala) and Gly-tRNA(Ala) via its editing domain. The protein is Alanine--tRNA ligase of Campylobacter jejuni subsp. doylei (strain ATCC BAA-1458 / RM4099 / 269.97).